Here is a 304-residue protein sequence, read N- to C-terminus: Small ribosomal subunit biogenesis GTPase RsgA (304 aa).

The CP-type G domain maps to 78–237 (VSFLTRPPVA…VADTPGFNRP (160 aa)). Residues 127–130 (TKTD) and 179–187 (GPSGVGKSS) each bind GTP. Positions 262, 267, 269, and 275 each coordinate Zn(2+).

This sequence belongs to the TRAFAC class YlqF/YawG GTPase family. RsgA subfamily. In terms of assembly, monomer. Associates with 30S ribosomal subunit, binds 16S rRNA. The cofactor is Zn(2+).

The protein resides in the cytoplasm. Its function is as follows. One of several proteins that assist in the late maturation steps of the functional core of the 30S ribosomal subunit. Helps release RbfA from mature subunits. May play a role in the assembly of ribosomal proteins into the subunit. Circularly permuted GTPase that catalyzes slow GTP hydrolysis, GTPase activity is stimulated by the 30S ribosomal subunit. In Synechococcus sp. (strain CC9311), this protein is Small ribosomal subunit biogenesis GTPase RsgA.